A 269-amino-acid chain; its full sequence is 4-hydroxy-tetrahydrodipicolinate reductase (269 aa).

NAD(+) is bound by residues 8 to 13 (GAAGRM), E34, 98 to 100 (GTT), and 122 to 125 (APNY). H155 acts as the Proton donor/acceptor in catalysis. H156 serves as a coordination point for (S)-2,3,4,5-tetrahydrodipicolinate. K159 functions as the Proton donor in the catalytic mechanism. 165-166 (GT) contacts (S)-2,3,4,5-tetrahydrodipicolinate.

It belongs to the DapB family.

It is found in the cytoplasm. It carries out the reaction (S)-2,3,4,5-tetrahydrodipicolinate + NAD(+) + H2O = (2S,4S)-4-hydroxy-2,3,4,5-tetrahydrodipicolinate + NADH + H(+). The catalysed reaction is (S)-2,3,4,5-tetrahydrodipicolinate + NADP(+) + H2O = (2S,4S)-4-hydroxy-2,3,4,5-tetrahydrodipicolinate + NADPH + H(+). Its pathway is amino-acid biosynthesis; L-lysine biosynthesis via DAP pathway; (S)-tetrahydrodipicolinate from L-aspartate: step 4/4. In terms of biological role, catalyzes the conversion of 4-hydroxy-tetrahydrodipicolinate (HTPA) to tetrahydrodipicolinate. The polypeptide is 4-hydroxy-tetrahydrodipicolinate reductase (Aliivibrio salmonicida (strain LFI1238) (Vibrio salmonicida (strain LFI1238))).